The chain runs to 553 residues: Ergothioneine transport permease/ergothioneine binding protein EgtU (553 aa).

Residues 57-236 (LAQHFIIVAL…LFSVLADKFV (180 aa)) enclose the ABC transmembrane type-1 domain. The next 6 membrane-spanning stretches (helical) occupy residues 61 to 81 (FIIVALSGFLVLVFGVLIGVF), 98 to 118 (FLYTIPSLALFALFIPVIGVG), 122 to 142 (ALLVLVLYGLLPIVYSTYNAL), 182 to 202 (IAVVMLVAMAGIGALIGAGGL), 219 to 239 (VAGSLIIALFSVLADKFVSVF), and 261 to 281 (VYTNLAVFLFLLLASALWLIP). The Periplasmic segment spans residues 282-553 (RNAIEEKPLV…AKDFLERLGL (272 aa)). Positions 288–549 (KPLVVATKPS…PKIVAKDFLE (262 aa)) are ergothioneine binding domain.

In the N-terminal section; belongs to the binding-protein-dependent transport system permease family. The protein in the C-terminal section; belongs to the OsmX family. As to quaternary structure, the complex is composed of two ATP-binding proteins (EgtV) and two transmembrane proteins (EgtU).

The protein localises to the cell inner membrane. Functionally, part of the ABC transporter complex EgtUV involved in the uptake of ergothioneine (EGT), a natural low-molecular weight (LMW) thiol antioxidant which protects H.pylori against bleach stress. Responsible for the translocation of the substrate across the membrane. Also contains a C-terminal periplasmic solute-binding domain (SBD) which binds to ergothioneine with low-micromolar affinity. Cannot bind the structurally similar compounds glycine betaine, choline, proline, carnitine or histidine. In Helicobacter pylori (strain G27), this protein is Ergothioneine transport permease/ergothioneine binding protein EgtU.